Reading from the N-terminus, the 556-residue chain is MSDTENRPTNFIRNIIDADLDSGKHTGVQTRFPPEPNGFLHIGHAKAICLNFGIAQDYNGLCNLRFDDTNPEKEDIDYVHAIQKDVKWLGFEWAGEIHYSSNYFDQLHGFAVELIEKGLAYVCFLNAEETREYRGTLNKPGKNSPYRDTSVEENLALFAKMKNGEFEEGICALRAKIDMTSSFMCLRDPIIYRVRFAHHHQTGDKWCIYPMYDFTHCLSDALEGITHSICTLEFQDNRRLYDWVIEQVSVPSTPHQYEFSRLNLEYTLMSKRKLNTLVEEKLVDSWDDPRMPTIAAFRRRGYTPASMREFAKRIGVTKMENTIEMSVLEACIREDLNDNAPRAMAVLDPIKLVIENYPEDKNEDLIVKNHPSDDEQGTRIVPFSKELYIEAEDFREEANKKYKRLVIDKAVRLRGAYVVTATRCDKDEQGNVTTVYCTYNEDTLGKNPTDGTKPKGVIHWVDANKSLDAIVRLYDRLFTVPNPAAADDFNSVINPQSLVTITGAKVEPSLAEAKPEFAYQFERQGYFCLDNDIKEPGALVFNRTVGLRDTWAKISQ.

The 'HIGH' region motif lies at 34 to 44; that stretch reads PEPNGFLHIGH. ATP-binding positions include 35–37 and 41–47; these read EPN and HIGHAKA. 2 residues coordinate L-glutamine: Asp-67 and Tyr-212. ATP contacts are provided by residues Thr-231, 261–262, and 269–271; these read RL and MSK. Positions 268-272 match the 'KMSKS' region motif; that stretch reads LMSKR.

Belongs to the class-I aminoacyl-tRNA synthetase family. Monomer.

It is found in the cytoplasm. It carries out the reaction tRNA(Gln) + L-glutamine + ATP = L-glutaminyl-tRNA(Gln) + AMP + diphosphate. In Colwellia psychrerythraea (strain 34H / ATCC BAA-681) (Vibrio psychroerythus), this protein is Glutamine--tRNA ligase.